The primary structure comprises 31 residues: Cytochrome b6-f complex subunit 6 (31 aa).

A helical membrane pass occupies residues 4-24; it reads IISYFGLLLATLTFTIVLFVG.

This sequence belongs to the PetL family. As to quaternary structure, the 4 large subunits of the cytochrome b6-f complex are cytochrome b6, subunit IV (17 kDa polypeptide, PetD), cytochrome f and the Rieske protein, while the 4 small subunits are PetG, PetL, PetM and PetN. The complex functions as a dimer.

Its subcellular location is the plastid. It localises to the chloroplast thylakoid membrane. In terms of biological role, component of the cytochrome b6-f complex, which mediates electron transfer between photosystem II (PSII) and photosystem I (PSI), cyclic electron flow around PSI, and state transitions. PetL is important for photoautotrophic growth as well as for electron transfer efficiency and stability of the cytochrome b6-f complex. This Staurastrum punctulatum (Green alga) protein is Cytochrome b6-f complex subunit 6.